The chain runs to 314 residues: Cathepsin L 2 (314 aa).

The first 24 residues, 1-24 (MMLLGASLYLNNTQEVSDEIDTAN), serve as a signal peptide directing secretion. A propeptide spans 25–109 (LYANWKMKYN…NASNANFQYK (85 aa)) (activation peptide). 3 disulfides stabilise this stretch: Cys132/Cys175, Cys166/Cys207, and Cys259/Cys302. Cys135 is a catalytic residue. Active-site residues include His265 and Asn282.

It belongs to the peptidase C1 family.

Its subcellular location is the secreted. It carries out the reaction Specificity close to that of papain. As compared to cathepsin B, cathepsin L exhibits higher activity toward protein substrates, but has little activity on Z-Arg-Arg-NHMec, and no peptidyl-dipeptidase activity.. May be involved in extracellular digestion. The chain is Cathepsin L 2 from Paramecium tetraurelia.